The primary structure comprises 288 residues: ATP synthase gamma chain (288 aa).

This sequence belongs to the ATPase gamma chain family. F-type ATPases have 2 components, CF(1) - the catalytic core - and CF(0) - the membrane proton channel. CF(1) has five subunits: alpha(3), beta(3), gamma(1), delta(1), epsilon(1). CF(0) has three main subunits: a, b and c.

It is found in the cell membrane. Its function is as follows. Produces ATP from ADP in the presence of a proton gradient across the membrane. The gamma chain is believed to be important in regulating ATPase activity and the flow of protons through the CF(0) complex. The protein is ATP synthase gamma chain of Symbiobacterium thermophilum (strain DSM 24528 / JCM 14929 / IAM 14863 / T).